The sequence spans 306 residues: tRNA dimethylallyltransferase 2 (306 aa).

Residue 11–18 (GPTASGKT) coordinates ATP. 13 to 18 (TASGKT) contacts substrate. Residues 36–39 (DSRQ) are interaction with substrate tRNA.

Belongs to the IPP transferase family. As to quaternary structure, monomer. The cofactor is Mg(2+).

The catalysed reaction is adenosine(37) in tRNA + dimethylallyl diphosphate = N(6)-dimethylallyladenosine(37) in tRNA + diphosphate. In terms of biological role, catalyzes the transfer of a dimethylallyl group onto the adenine at position 37 in tRNAs that read codons beginning with uridine, leading to the formation of N6-(dimethylallyl)adenosine (i(6)A). The protein is tRNA dimethylallyltransferase 2 of Bacteroides thetaiotaomicron (strain ATCC 29148 / DSM 2079 / JCM 5827 / CCUG 10774 / NCTC 10582 / VPI-5482 / E50).